A 342-amino-acid polypeptide reads, in one-letter code: Cytosolic Fe-S cluster assembly factor NBP35 (342 aa).

A disordered region spans residues 1–45; it reads MGPSLETPEPVEDVLANPLKQKPQLVAPEPEHCPGPESEQAGTAD. The [4Fe-4S] cluster site is built by Cys33, Cys47, Cys50, and Cys56. 86–93 lines the ATP pocket; sequence GKGGVGKS. 2 residues coordinate [4Fe-4S] cluster: Cys259 and Cys262.

The protein belongs to the Mrp/NBP35 ATP-binding proteins family. NUBP1/NBP35 subfamily. Heterotetramer of 2 NBP35 and 2 CFD1 chains. It depends on [4Fe-4S] cluster as a cofactor.

It localises to the cytoplasm. Functionally, component of the cytosolic iron-sulfur (Fe/S) protein assembly (CIA) machinery. Required for maturation of extramitochondrial Fe-S proteins. The NBP35-CFD1 heterotetramer forms a Fe-S scaffold complex, mediating the de novo assembly of an Fe-S cluster and its transfer to target apoproteins. In Chaetomium globosum (strain ATCC 6205 / CBS 148.51 / DSM 1962 / NBRC 6347 / NRRL 1970) (Soil fungus), this protein is Cytosolic Fe-S cluster assembly factor NBP35.